We begin with the raw amino-acid sequence, 167 residues long: MNTEAVAPDVAEEEVLTSYTSESSASADDAPKKERPALTVSGAAVGRRKEAIARVRVTPGTGKWIVNGRELADYFPNKLHQQEVNEPFKILDLDGAYDVAARISGGGPSGQAGALRLGVARSLNEIDVDNNRATLKKAGFLTRDARVIERKKAGLKKARKAPQYSKR.

Residues 1–41 form a disordered region; the sequence is MNTEAVAPDVAEEEVLTSYTSESSASADDAPKKERPALTVS. Positions 17–26 are enriched in polar residues; that stretch reads TSYTSESSAS.

It belongs to the universal ribosomal protein uS9 family.

The sequence is that of Small ribosomal subunit protein uS9 from Renibacterium salmoninarum (strain ATCC 33209 / DSM 20767 / JCM 11484 / NBRC 15589 / NCIMB 2235).